Consider the following 297-residue polypeptide: IMPACT family member C14C8.09c (297 aa).

Positions 225 to 255 form a coiled coil; it reads LRSELQEKNQKDKKKEVNKLEEKMTNAKEPN. Basic and acidic residues-rich tracts occupy residues 228 to 250 and 280 to 297; these read ELQEKNQKDKKKEVNKLEEKMTN and SVDHKEASKIIKDVEKEE. Residues 228–297 form a disordered region; that stretch reads ELQEKNQKDK…KIIKDVEKEE (70 aa).

Belongs to the IMPACT family.

The chain is IMPACT family member C14C8.09c from Schizosaccharomyces pombe (strain 972 / ATCC 24843) (Fission yeast).